Reading from the N-terminus, the 246-residue chain is Probable transcriptional regulatory protein CLL_A1008 (246 aa).

This sequence belongs to the TACO1 family.

The protein localises to the cytoplasm. This chain is Probable transcriptional regulatory protein CLL_A1008, found in Clostridium botulinum (strain Eklund 17B / Type B).